Reading from the N-terminus, the 248-residue chain is Adenosylcobinamide-GDP ribazoletransferase (248 aa).

The next 7 membrane-spanning stretches (helical) occupy residues 32–52, 60–80, 103–123, 134–154, 170–190, 195–215, and 227–247; these read FPLV…IGMV, ALLV…DGLA, AVGS…WIAL, WIVS…SVMT, AGGW…VLVM, LPIV…GMLA, and LGAS…LLLF.

The protein belongs to the CobS family. The cofactor is Mg(2+).

It localises to the cell inner membrane. It carries out the reaction alpha-ribazole + adenosylcob(III)inamide-GDP = adenosylcob(III)alamin + GMP + H(+). The catalysed reaction is alpha-ribazole 5'-phosphate + adenosylcob(III)inamide-GDP = adenosylcob(III)alamin 5'-phosphate + GMP + H(+). The protein operates within cofactor biosynthesis; adenosylcobalamin biosynthesis; adenosylcobalamin from cob(II)yrinate a,c-diamide: step 7/7. Its function is as follows. Joins adenosylcobinamide-GDP and alpha-ribazole to generate adenosylcobalamin (Ado-cobalamin). Also synthesizes adenosylcobalamin 5'-phosphate from adenosylcobinamide-GDP and alpha-ribazole 5'-phosphate. The protein is Adenosylcobinamide-GDP ribazoletransferase of Prosthecochloris aestuarii (strain DSM 271 / SK 413).